Here is a 612-residue protein sequence, read N- to C-terminus: MCGIVGANSTRNVTNILIEGLKKLEYRGYDSAGLAIIDDKNNIDICKEVGKVIELEKSVHNLANFKGDIGIAHTRWATHGKPSKNNSHPHASESFCIVHNGVIENFAELKKVLINDGYKFKSDTDTEVIAHLLQKEWRDNFSIVDNIKYIMAMLKGAYAVAIISQKFSDKIVAVRSGSPLVIGVGIDENFISSDALSLLPVTNKFSYLDEGDIAIISKDNVEVFDNNGAAKNLEVEEYNYSSSSASKDGYKHYMLKEIYEQPEAVSNTILASLADGEISLDSFDKRAKELFEKTKHICIVACGTSYNAGMTAKYWIEKYAKVPCSVEIASEIRYRDNVVVDGSLFVSISQSGETADTLESLRKSKKQNYVGSMCICNVPNSSLVRESDIAFMTKAGVEIGVASTKAFTTQLVALAIFTLVIAKLKNSLTDQQIAKYTEELKNIRALVMGALKLDTEIDQISEYFSDKEHTIFLGRGLYYPIAIEGALKLKEISYIHAEAYPSGELKHGPLALVDKNMPIVAVVPNDELLDKTLSNLQEVHARGGKLILFVDKAVKERVNFDNSIVLELDAGHDFSAPVVFTIPLQLLSYHVAIIKGTDVDQPRNLAKSVTVE.

Residue Cys-2 is the Nucleophile; for GATase activity of the active site. Residues 2–219 form the Glutamine amidotransferase type-2 domain; the sequence is CGIVGANSTR…EGDIAIISKD (218 aa). 2 consecutive SIS domains span residues 287 to 427 and 460 to 602; these read AKEL…LKNS and ISEY…VDQP. The active-site For Fru-6P isomerization activity is the Lys-607.

Homodimer.

Its subcellular location is the cytoplasm. It catalyses the reaction D-fructose 6-phosphate + L-glutamine = D-glucosamine 6-phosphate + L-glutamate. Functionally, catalyzes the first step in hexosamine metabolism, converting fructose-6P into glucosamine-6P using glutamine as a nitrogen source. This is Glutamine--fructose-6-phosphate aminotransferase [isomerizing] from Francisella tularensis subsp. tularensis (strain SCHU S4 / Schu 4).